Reading from the N-terminus, the 304-residue chain is Probable actin-related protein 2/3 complex subunit 2 (304 aa).

It belongs to the ARPC2 family. In terms of assembly, component of the Arp2/3 complex.

It localises to the cytoplasm. It is found in the cytoskeleton. Its function is as follows. Functions as actin-binding component of the Arp2/3 complex which is involved in regulation of actin polymerization and together with an activating nucleation-promoting factor (NPF) mediates the formation of branched actin networks. Seems to contact the mother actin filament. This Anopheles gambiae (African malaria mosquito) protein is Probable actin-related protein 2/3 complex subunit 2 (Arc-p34).